Reading from the N-terminus, the 203-residue chain is Ras-related protein Rab-7L1 (203 aa).

Residues S33, K34, H35, Y36, K37, and T39 each contribute to the GTP site. The Effector region motif lies at 36 to 44 (YKSTVGVDF). Phosphothreonine; by LRRK2 is present on T71. S72 is subject to Phosphoserine; by LRRK2. K126, V156, and K157 together coordinate GTP. 2 S-geranylgeranyl cysteine lipidation sites follow: C202 and C203.

Belongs to the small GTPase superfamily. Rab family. In terms of assembly, interacts with LRRK2 (via the N-terminus); this interaction is direct and stimulates kinase activity. In terms of processing, in case of Salmonella enterica serovar Typhimurium (S.typhimurium) infection, is proteolytically cleaved between Gly-41 and Val-42 by the GtgE viral protease encoded on the Gifsy-2 lysogen bacteriophage, which therefore prevents the recruitment of RAB29 to S.typhimurium-containing vacuoles. In contrast, no proteolytically cleavage is detected in S.typhi-infected cells. In terms of tissue distribution, ubiquitous.

Its subcellular location is the cell membrane. The protein resides in the cytoplasm. The protein localises to the perinuclear region. It localises to the golgi apparatus. It is found in the golgi apparatus membrane. Its subcellular location is the trans-Golgi network. The protein resides in the vacuole. The protein localises to the cytoskeleton. Its function is as follows. The small GTPases Rab are key regulators in vesicle trafficking. Essential for maintaining the integrity of the endosome-trans-Golgi network structure. Together with LRRK2, plays a role in the retrograde trafficking pathway for recycling proteins, such as mannose 6 phosphate receptor (M6PR), between lysosomes and the Golgi apparatus in a retromer-dependent manner. Recruits LRRK2 to the Golgi complex and stimulates LRRK2 kinase activity. Stimulates phosphorylation of RAB10 'Thr-73' by LRRK2. Regulates neuronal process morphology in the intact central nervous system (CNS). May play a role in the formation of typhoid toxin transport intermediates during Salmonella enterica serovar Typhi (S.typhi) epithelial cell infection. The protein is Ras-related protein Rab-7L1 (RAB29) of Homo sapiens (Human).